The following is a 165-amino-acid chain: Large ribosomal subunit protein uL10 (165 aa).

This sequence belongs to the universal ribosomal protein uL10 family. Part of the ribosomal stalk of the 50S ribosomal subunit. The N-terminus interacts with L11 and the large rRNA to form the base of the stalk. The C-terminus forms an elongated spine to which L12 dimers bind in a sequential fashion forming a multimeric L10(L12)X complex.

Forms part of the ribosomal stalk, playing a central role in the interaction of the ribosome with GTP-bound translation factors. This Burkholderia lata (strain ATCC 17760 / DSM 23089 / LMG 22485 / NCIMB 9086 / R18194 / 383) protein is Large ribosomal subunit protein uL10.